We begin with the raw amino-acid sequence, 224 residues long: Cerebellin-2 (224 aa).

The signal sequence occupies residues 1–51 (MPAPGQGPRGPLLSMPGRRGALREPADFGSSLGAVLALLLLLLPACCPVRA). Asn53 and Asn110 each carry an N-linked (GlcNAc...) asparagine glycan. Positions 88 to 224 (SGSAKVAFSA…TFSGFLVFPL (137 aa)) constitute a C1q domain.

In terms of assembly, homohexamer; disulfide-linked homotrimers. The trimers are assembled via the globular C1q domains. The trimers associate via N-terminal cysteine residues to form disulfide-linked hexamers. May form homooligomers or heterooligomers with CBLN1 and CBLN3 prior to secretion. Once secreted, does not interact with other CBLN family members. Interacts with GRID2, and more weakly with GRID1. Interacts with NRXN1 and NRXN2 long and short isoforms produced by alternative promoter usage. Weakly interacts with NRXN3 short isoform and not at all with NRXN3 long isoform. Expressed in various brain regions with higher levels in the olfactory bulb, cerebral cortex, certain thalamic and hypothalamic nuclei, superior and inferior colliculi and some brainstem nuclei. Highly expressed in the dorsal medial habenula.

Its subcellular location is the secreted. Acts as a synaptic organizer in specific subsets of neurons in the brain. Essential for long-term maintenance but not establishment of excitatory synapses. Functions as part of a trans-synaptic complex by binding to postsynaptic GRID1 and presynaptic neurexins. This interaction helps regulate the activity of NMDA and AMPA receptors at hippocampal synapses without affecting synapse formation. NRXN1B-CBLN2-GRID1 complex transduce presynaptic signals into postsynaptic NMDAR response. NRXN3B-CBLN2-GRID1 complex transduce presynaptic signals into postsynaptic AMPAR response. The chain is Cerebellin-2 (Cbln2) from Mus musculus (Mouse).